The primary structure comprises 352 residues: MTELELLGPRASGEPLGTAVLKAVAEDFQVDEVLDIPLSGQGEHLWLWVEKRDLNTEEAARRLARAAGVPVRSISYAGLKDRQALTRQWFSLHLPGKADPDLSRAEDASLRVLKQVRHQRKLQRGAHSANGFTLRLTALAADHQAVDARLEQLRQQGVPNYFGTQRFGHGGGNVHDALDWAARKALPEQRNVRSRLLSAGRSYLFNQLLAARVADGSWARAQVGDLLAFTDSRSFFPAGEAECADPRLAILDLHPTGPMWGEGASPAGAAPAQLENAIGARQPALCQWLAQAGMDHERRILRLPIGGLTWHYPEPDILQLEFVLPAGCFATVVVREVVDLVSAGQTDSPCVF.

Residue Asp-81 is the Nucleophile of the active site. The region spanning 157–303 is the TRUD domain; sequence GVPNYFGTQR…MDHERRILRL (147 aa).

The protein belongs to the pseudouridine synthase TruD family.

It carries out the reaction uridine(13) in tRNA = pseudouridine(13) in tRNA. In terms of biological role, responsible for synthesis of pseudouridine from uracil-13 in transfer RNAs. The chain is tRNA pseudouridine synthase D from Pseudomonas putida (strain ATCC 700007 / DSM 6899 / JCM 31910 / BCRC 17059 / LMG 24140 / F1).